A 373-amino-acid polypeptide reads, in one-letter code: Chaperone protein DnaJ (373 aa).

In terms of domain architecture, J spans Asn4–Gly68. The CR-type zinc finger occupies Gly136 to Gln214. Cys149, Cys152, Cys166, Cys169, Cys188, Cys191, Cys202, and Cys205 together coordinate Zn(2+). CXXCXGXG motif repeat units follow at residues Cys149–Gly156, Cys166–Gly173, Cys188–Gly195, and Cys202–Gly209.

Belongs to the DnaJ family. As to quaternary structure, homodimer. Requires Zn(2+) as cofactor.

It localises to the cytoplasm. Functionally, participates actively in the response to hyperosmotic and heat shock by preventing the aggregation of stress-denatured proteins and by disaggregating proteins, also in an autonomous, DnaK-independent fashion. Unfolded proteins bind initially to DnaJ; upon interaction with the DnaJ-bound protein, DnaK hydrolyzes its bound ATP, resulting in the formation of a stable complex. GrpE releases ADP from DnaK; ATP binding to DnaK triggers the release of the substrate protein, thus completing the reaction cycle. Several rounds of ATP-dependent interactions between DnaJ, DnaK and GrpE are required for fully efficient folding. Also involved, together with DnaK and GrpE, in the DNA replication of plasmids through activation of initiation proteins. This is Chaperone protein DnaJ from Rickettsia rickettsii (strain Sheila Smith).